The chain runs to 63 residues: MSRVCEICGKGSLSGNSVSKSKIHTKRVWKPNLVNVKTEIGGRTLTIKMCSRCLKSDYVTKKV.

This sequence belongs to the bacterial ribosomal protein bL28 family.

The polypeptide is Large ribosomal subunit protein bL28 (Treponema denticola (strain ATCC 35405 / DSM 14222 / CIP 103919 / JCM 8153 / KCTC 15104)).